The primary structure comprises 386 residues: Chorismate synthase (386 aa).

The segment at 32–60 (LPLSEDDVQRELDRRRPGQSGVSTPRSER) is disordered. Basic and acidic residues predominate over residues 38 to 47 (DVQRELDRRR). Arg46 contributes to the NADP(+) binding site. FMN-binding positions include 123–125 (RAS), Gly290, 305–309 (KPTPS), and Arg332.

This sequence belongs to the chorismate synthase family. The cofactor is FMNH2.

The catalysed reaction is 5-O-(1-carboxyvinyl)-3-phosphoshikimate = chorismate + phosphate. It participates in metabolic intermediate biosynthesis; chorismate biosynthesis; chorismate from D-erythrose 4-phosphate and phosphoenolpyruvate: step 7/7. Its function is as follows. Catalyzes the anti-1,4-elimination of the C-3 phosphate and the C-6 proR hydrogen from 5-enolpyruvylshikimate-3-phosphate (EPSP) to yield chorismate, which is the branch point compound that serves as the starting substrate for the three terminal pathways of aromatic amino acid biosynthesis. This reaction introduces a second double bond into the aromatic ring system. The chain is Chorismate synthase from Methanopyrus kandleri (strain AV19 / DSM 6324 / JCM 9639 / NBRC 100938).